The sequence spans 475 residues: tRNA-2-methylthio-N(6)-dimethylallyladenosine synthase (475 aa).

Residues 3 to 120 (KKLHIKTWGC…LPEMIDQIRA (118 aa)) enclose the MTTase N-terminal domain. Positions 12, 49, 83, 157, 161, and 164 each coordinate [4Fe-4S] cluster. Positions 143-375 (RADGPSAFVS…QDRITQQAMR (233 aa)) constitute a Radical SAM core domain. The TRAM domain maps to 378–441 (RQMVGTVQRI…TNSLRGVFIR (64 aa)).

The protein belongs to the methylthiotransferase family. MiaB subfamily. In terms of assembly, monomer. [4Fe-4S] cluster is required as a cofactor.

Its subcellular location is the cytoplasm. The catalysed reaction is N(6)-dimethylallyladenosine(37) in tRNA + (sulfur carrier)-SH + AH2 + 2 S-adenosyl-L-methionine = 2-methylsulfanyl-N(6)-dimethylallyladenosine(37) in tRNA + (sulfur carrier)-H + 5'-deoxyadenosine + L-methionine + A + S-adenosyl-L-homocysteine + 2 H(+). Catalyzes the methylthiolation of N6-(dimethylallyl)adenosine (i(6)A), leading to the formation of 2-methylthio-N6-(dimethylallyl)adenosine (ms(2)i(6)A) at position 37 in tRNAs that read codons beginning with uridine. The polypeptide is tRNA-2-methylthio-N(6)-dimethylallyladenosine synthase (Shewanella halifaxensis (strain HAW-EB4)).